A 709-amino-acid polypeptide reads, in one-letter code: MNIRSNPDTTLPAVTTGPLPSSRKIFATPDEAPELRVPLREIILSDGAGEPNLPVYDTTGPYTDPSVTIDVNAGLSRIRTAWVKERGGVEEYQGRDVKPEDNGNVGAAHAAKSFTAYHKPLRGLDAPAAGTANSPPPRGEGSGVGGATNTVPSSTPLPTPPPQGGREQGIAYACGPHLPPMVTQLEFARAGIITKEMIYVATRENLGRKQQLARAEAALADGESFGASVPAFVTPEFVRSEIARGRAIIPANINHGELEPMIIGRNFLTKINANIGNSAVTSSVEEEVDKMVWAIRWGADTVMDLSTGRNIHTTREWILRNAPIPIGTVPIYQALEKCEGDPVKLTWELYRDTLVEQCEQGVDYFTIHAGVRLAYIHLTANRTTGIVSRGGSIMAKWCLAHHQESFLYTHFDEICDLMRKYDVSFSLGDGLRPGSIADANDRAQFAELETLGELTKIAWDKGCQVMIEGPGHVPLHKIKINMDKQLKECGEAPFYTLGPLTTDIAPGYDHITSGIGAAMIGWFGCAMLCYVTPKEHLGLPDRNDVKVGVITYKIAAHASDLAKGHPAAQLRDDALSRARFDFRWQDQFNLGLDPDTAQAFHDETLPKDAHKVAHFCSMCGPKFCSMKITQDVRDYAAGLGDNEKAALNLAGGSSLGSVGMSISGKLEDGLPADAFAKAGMAEMSEKFRTMGEQLYLDAEKVKESNKALS.

Positions Met1–Ala13 are enriched in polar residues. Disordered regions lie at residues Met1–Ser21 and Asp125–Gln168. Substrate is bound by residues Asn274, Met303, Tyr332, His368, Ser388–Gly390, Asp429–Arg432, and Glu468. His472 contributes to the Zn(2+) binding site. Substrate is bound at residue Tyr495. A Zn(2+)-binding site is contributed by His536. Positions 616, 619, and 624 each coordinate [4Fe-4S] cluster.

The protein belongs to the ThiC family. Homodimer. [4Fe-4S] cluster serves as cofactor.

It carries out the reaction 5-amino-1-(5-phospho-beta-D-ribosyl)imidazole + S-adenosyl-L-methionine = 4-amino-2-methyl-5-(phosphooxymethyl)pyrimidine + CO + 5'-deoxyadenosine + formate + L-methionine + 3 H(+). The protein operates within cofactor biosynthesis; thiamine diphosphate biosynthesis. In terms of biological role, catalyzes the synthesis of the hydroxymethylpyrimidine phosphate (HMP-P) moiety of thiamine from aminoimidazole ribotide (AIR) in a radical S-adenosyl-L-methionine (SAM)-dependent reaction. The polypeptide is Phosphomethylpyrimidine synthase (Rhodopseudomonas palustris (strain BisB18)).